A 374-amino-acid chain; its full sequence is Cathepsin W (374 aa).

A signal peptide spans 1–21 (MAITVYLSCLLVLSMAGLAQG). The propeptide occupies 22–127 (IKSSLRSQDP…EVGSEEWGES (106 aa)). Cystine bridges form between Cys150/Cys191 and Cys184/Cys226. Residue Cys153 is part of the active site. An N-linked (GlcNAc...) asparagine glycan is attached at Asn205. Residues His291 and Asn329 contribute to the active site. Asn347 is a glycosylation site (N-linked (GlcNAc...) asparagine).

The protein belongs to the peptidase C1 family.

Its subcellular location is the endoplasmic reticulum. Its function is as follows. May have a specific function in the mechanism or regulation of T-cell cytolytic activity. The sequence is that of Cathepsin W (CTSW) from Felis catus (Cat).